The sequence spans 391 residues: Phosphoglycerate kinase (391 aa).

Residues 21–23, R36, 59–62, R113, and R146 each bind substrate; these read DLN and HRGR. Residues K197, E314, and 340–343 each bind ATP; that span reads GGDT.

Belongs to the phosphoglycerate kinase family. Monomer.

It is found in the cytoplasm. The catalysed reaction is (2R)-3-phosphoglycerate + ATP = (2R)-3-phospho-glyceroyl phosphate + ADP. It functions in the pathway carbohydrate degradation; glycolysis; pyruvate from D-glyceraldehyde 3-phosphate: step 2/5. The chain is Phosphoglycerate kinase from Ruthia magnifica subsp. Calyptogena magnifica.